The primary structure comprises 401 residues: Dual-specificity RNA methyltransferase RlmN (401 aa).

The active-site Proton acceptor is the E114. A Radical SAM core domain is found at 120–365 (DKGRGTLCVS…TMVRRTRGDD (246 aa)). Residues C127 and C370 are joined by a disulfide bond. The [4Fe-4S] cluster site is built by C134, C138, and C141. S-adenosyl-L-methionine contacts are provided by residues 187-188 (GE), S219, 241-243 (SLH), and N327. C370 acts as the S-methylcysteine intermediate in catalysis.

It belongs to the radical SAM superfamily. RlmN family. Requires [4Fe-4S] cluster as cofactor.

It is found in the cytoplasm. It carries out the reaction adenosine(2503) in 23S rRNA + 2 reduced [2Fe-2S]-[ferredoxin] + 2 S-adenosyl-L-methionine = 2-methyladenosine(2503) in 23S rRNA + 5'-deoxyadenosine + L-methionine + 2 oxidized [2Fe-2S]-[ferredoxin] + S-adenosyl-L-homocysteine. The enzyme catalyses adenosine(37) in tRNA + 2 reduced [2Fe-2S]-[ferredoxin] + 2 S-adenosyl-L-methionine = 2-methyladenosine(37) in tRNA + 5'-deoxyadenosine + L-methionine + 2 oxidized [2Fe-2S]-[ferredoxin] + S-adenosyl-L-homocysteine. Specifically methylates position 2 of adenine 2503 in 23S rRNA and position 2 of adenine 37 in tRNAs. m2A2503 modification seems to play a crucial role in the proofreading step occurring at the peptidyl transferase center and thus would serve to optimize ribosomal fidelity. In Xanthomonas campestris pv. campestris (strain 8004), this protein is Dual-specificity RNA methyltransferase RlmN.